We begin with the raw amino-acid sequence, 147 residues long: Large ribosomal subunit protein bL9 (147 aa).

Belongs to the bacterial ribosomal protein bL9 family.

Functionally, binds to the 23S rRNA. The sequence is that of Large ribosomal subunit protein bL9 from Trichlorobacter lovleyi (strain ATCC BAA-1151 / DSM 17278 / SZ) (Geobacter lovleyi).